Consider the following 490-residue polypeptide: N-succinylglutamate 5-semialdehyde dehydrogenase (490 aa).

Residue 223–228 (GSSRTG) participates in NAD(+) binding. Active-site residues include glutamate 246 and cysteine 280.

It belongs to the aldehyde dehydrogenase family. AstD subfamily.

The enzyme catalyses N-succinyl-L-glutamate 5-semialdehyde + NAD(+) + H2O = N-succinyl-L-glutamate + NADH + 2 H(+). It participates in amino-acid degradation; L-arginine degradation via AST pathway; L-glutamate and succinate from L-arginine: step 4/5. Catalyzes the NAD-dependent reduction of succinylglutamate semialdehyde into succinylglutamate. The sequence is that of N-succinylglutamate 5-semialdehyde dehydrogenase from Pseudoalteromonas atlantica (strain T6c / ATCC BAA-1087).